The primary structure comprises 238 residues: UPF0280 protein Msm_0088 (238 aa).

This sequence belongs to the UPF0280 family.

This Methanobrevibacter smithii (strain ATCC 35061 / DSM 861 / OCM 144 / PS) protein is UPF0280 protein Msm_0088.